The chain runs to 466 residues: ATP synthase subunit beta (466 aa).

Residue 155-162 (GGAGVGKT) coordinates ATP.

The protein belongs to the ATPase alpha/beta chains family. F-type ATPases have 2 components, CF(1) - the catalytic core - and CF(0) - the membrane proton channel. CF(1) has five subunits: alpha(3), beta(3), gamma(1), delta(1), epsilon(1). CF(0) has three main subunits: a(1), b(2) and c(9-12). The alpha and beta chains form an alternating ring which encloses part of the gamma chain. CF(1) is attached to CF(0) by a central stalk formed by the gamma and epsilon chains, while a peripheral stalk is formed by the delta and b chains.

It localises to the cell inner membrane. It carries out the reaction ATP + H2O + 4 H(+)(in) = ADP + phosphate + 5 H(+)(out). Produces ATP from ADP in the presence of a proton gradient across the membrane. The catalytic sites are hosted primarily by the beta subunits. The protein is ATP synthase subunit beta of Azoarcus sp. (strain BH72).